The sequence spans 141 residues: MNTERTLVLIKPDGVRRGLIGEIISRFERKGLKIKALKMLRLTREKAEEFYSVHRGKPFFVSLIEFMTSGPIIAMILEGDMAISVVRRMIGPTDGREAPPGTIRGDYSLSKSQNVVHASDSPESAMREIRVIFKDDEIIDW.

Lys-11, Phe-59, Arg-87, Thr-93, Arg-104, and Asn-114 together coordinate ATP. The active-site Pros-phosphohistidine intermediate is His-117.

Belongs to the NDK family. The cofactor is Mg(2+).

The protein resides in the cytoplasm. It catalyses the reaction a 2'-deoxyribonucleoside 5'-diphosphate + ATP = a 2'-deoxyribonucleoside 5'-triphosphate + ADP. The enzyme catalyses a ribonucleoside 5'-diphosphate + ATP = a ribonucleoside 5'-triphosphate + ADP. Major role in the synthesis of nucleoside triphosphates other than ATP. The ATP gamma phosphate is transferred to the NDP beta phosphate via a ping-pong mechanism, using a phosphorylated active-site intermediate. In Staphylothermus marinus (strain ATCC 43588 / DSM 3639 / JCM 9404 / F1), this protein is Nucleoside diphosphate kinase.